Here is a 459-residue protein sequence, read N- to C-terminus: MRAEWIAKRRGQSNVSQMHYARQGVITEEMHYVANRENLPVDLIRDEVARGRMIIPANINHVNLEPMCIGIASQCKVNANIGASPNSSDINEELEKLRLAVKYGADTVMDLSTGGGDLDTIRTAIINDSPVPIGTVPIYQALESVHGRIENLTPDDFLHIIEKHAQQGVDYMTIHAGILMEYLPLVRNRLTGIVSRGGGIIAKWMLHHHKQNPLYTHFDDIIEIFKKYDVSFSLGDSLRPGCLHDASDEAQLSELKTLGQLTRRAWEHDVQVMVEGPGHVPMDQIEFNVKKQMEECSEAPFYVLGPLVTDIAPGYDHITSAIGAAMAGWYGTAMLCYVTPKEHLGLPNAEDVRNGLIAYKIAAHAADVARHRQGARDRDDQLSNARYNFDWNRQFELSLDPDRAKEYHDETLPADIYKTAEFCSMCGPKFCPMQTKVDADALTELEKFLAKDKETVSQS.

Substrate-binding positions include N80, M109, Y139, H175, 195-197 (SRG), 236-239 (DSLR), and E275. A Zn(2+)-binding site is contributed by H279. Residue Y302 participates in substrate binding. H343 provides a ligand contact to Zn(2+). 3 residues coordinate [4Fe-4S] cluster: C423, C426, and C431.

The protein belongs to the ThiC family. Requires [4Fe-4S] cluster as cofactor.

It carries out the reaction 5-amino-1-(5-phospho-beta-D-ribosyl)imidazole + S-adenosyl-L-methionine = 4-amino-2-methyl-5-(phosphooxymethyl)pyrimidine + CO + 5'-deoxyadenosine + formate + L-methionine + 3 H(+). It participates in cofactor biosynthesis; thiamine diphosphate biosynthesis. Functionally, catalyzes the synthesis of the hydroxymethylpyrimidine phosphate (HMP-P) moiety of thiamine from aminoimidazole ribotide (AIR) in a radical S-adenosyl-L-methionine (SAM)-dependent reaction. The protein is Phosphomethylpyrimidine synthase of Gloeothece citriformis (strain PCC 7424) (Cyanothece sp. (strain PCC 7424)).